A 446-amino-acid chain; its full sequence is 3-phosphoshikimate 1-carboxyvinyltransferase (446 aa).

Positions 26, 27, and 31 each coordinate 3-phosphoshikimate. A phosphoenolpyruvate-binding site is contributed by Lys-26. Phosphoenolpyruvate contacts are provided by Gly-100 and Arg-128. Positions 171, 172, 173, 200, 315, and 344 each coordinate 3-phosphoshikimate. Gln-173 serves as a coordination point for phosphoenolpyruvate. The active-site Proton acceptor is the Glu-315. Phosphoenolpyruvate is bound by residues Arg-348, Arg-389, and Lys-414.

It belongs to the EPSP synthase family. Monomer.

The protein localises to the cytoplasm. It catalyses the reaction 3-phosphoshikimate + phosphoenolpyruvate = 5-O-(1-carboxyvinyl)-3-phosphoshikimate + phosphate. It participates in metabolic intermediate biosynthesis; chorismate biosynthesis; chorismate from D-erythrose 4-phosphate and phosphoenolpyruvate: step 6/7. In terms of biological role, catalyzes the transfer of the enolpyruvyl moiety of phosphoenolpyruvate (PEP) to the 5-hydroxyl of shikimate-3-phosphate (S3P) to produce enolpyruvyl shikimate-3-phosphate and inorganic phosphate. In Mycolicibacterium gilvum (strain PYR-GCK) (Mycobacterium gilvum (strain PYR-GCK)), this protein is 3-phosphoshikimate 1-carboxyvinyltransferase.